The following is a 1231-amino-acid chain: STE20-like serine/threonine-protein kinase (1231 aa).

Serine 14 carries the post-translational modification Phosphoserine. Residues 34-292 form the Protein kinase domain; that stretch reads WETIGELGDG…TSQLLQHPFV (259 aa). ATP-binding positions include 40–48 and lysine 63; that span reads LGDGAFGKV. Aspartate 155 acts as the Proton acceptor in catalysis. Phosphothreonine is present on threonine 183. Serine 189 is modified (phosphoserine). A disordered region spans residues 309–351; that stretch reads AEVTEEVEDGKEEDDDEEIENSLPIPTNKRASSDLSIASSEED. The segment covering 312-328 has biased composition (acidic residues); sequence TEEVEDGKEEDDDEEIE. Phosphoserine is present on residues serine 330, serine 340, serine 341, serine 344, serine 347, serine 348, serine 354, and serine 372. Residues 337–347 are compositionally biased toward polar residues; it reads KRASSDLSIAS. Residues 405–478 form a disordered region; the sequence is PDRATELPES…KQPVLENKLV (74 aa). Basic and acidic residues-rich tracts occupy residues 407–428 and 446–478; these read RATE…RLPD and DHAV…NKLV. Serine 507 is modified (phosphoserine). Residues 516 to 531 are compositionally biased toward basic and acidic residues; it reads THEKLRKDDTTQKDVI. Residues 516–757 form a disordered region; sequence THEKLRKDDT…TGSTADNSSI (242 aa). Phosphoserine occurs at positions 536 and 554. Residues 601-613 are compositionally biased toward basic and acidic residues; sequence TDQKLVENTHEKQ. The span at 615 to 624 shows a compositional bias: polar residues; sequence PISSETTLDT. Phosphoserine occurs at positions 641 and 661. Positions 641–660 are enriched in acidic residues; sequence STEEVEVEGAVSETDEEDVQ. Residues 683–692 are compositionally biased toward low complexity; that stretch reads EAPAQVEVQV. Pro residues predominate over residues 693-706; that stretch reads PVPPQPSEPPPAPI. Serine 775 bears the Phosphoserine mark. Threonine 810 is modified (phosphothreonine). A Phosphoserine modification is found at serine 814. Positions 822–1065 form a coiled coil; sequence LRRQELRELR…LKNRQTQERA (244 aa). One can recognise a UVR domain in the interval 871 to 906; the sequence is DQEIENLEKQQKQTIERLEQEHTNRLRDEAKRIKGE. Threonine 1093 bears the Phosphothreonine mark. The stretch at 1105-1179 forms a coiled coil; that stretch reads SAQEEKRQKN…ELKEWREKLR (75 aa).

It belongs to the protein kinase superfamily. STE Ser/Thr protein kinase family. STE20 subfamily. Proteolytically cleaved by caspase-3. Post-translationally, autophosphorylated. As to expression, ubiquitously expressed.

Its subcellular location is the cytoplasm. The catalysed reaction is L-seryl-[protein] + ATP = O-phospho-L-seryl-[protein] + ADP + H(+). The enzyme catalyses L-threonyl-[protein] + ATP = O-phospho-L-threonyl-[protein] + ADP + H(+). Its function is as follows. Mediates apoptosis and actin stress fiber dissolution. The polypeptide is STE20-like serine/threonine-protein kinase (SLK) (Cavia porcellus (Guinea pig)).